The primary structure comprises 561 residues: Putative transport protein KPN78578_08530 (561 aa).

Transmembrane regions (helical) follow at residues 8 to 28, 37 to 57, 66 to 86, 94 to 114, and 158 to 178; these read LLNG…LCLG, LGNS…HFAI, FMLF…SIFF, MLAL…GKVF, and HLSL…IVGA. 2 consecutive RCK C-terminal domains span residues 202–288 and 292–373; these read LDTD…SFRN and VFDR…RIGF. 5 helical membrane passes run 383–403, 406–426, 447–467, 478–498, and 540–560; these read LLAF…TFQF, FSFG…LGFL, FGLM…INNG, AGLI…AYVL, and AIAN…WPGL.

It belongs to the AAE transporter (TC 2.A.81) family. YbjL subfamily.

Its subcellular location is the cell membrane. This Klebsiella pneumoniae subsp. pneumoniae (strain ATCC 700721 / MGH 78578) protein is Putative transport protein KPN78578_08530.